Here is a 213-residue protein sequence, read N- to C-terminus: Pyrrolidone-carboxylate peptidase (213 aa).

Residues Glu80, Cys143, and His165 contribute to the active site.

This sequence belongs to the peptidase C15 family. Homotetramer.

The protein localises to the cytoplasm. It catalyses the reaction Release of an N-terminal pyroglutamyl group from a polypeptide, the second amino acid generally not being Pro.. Functionally, removes 5-oxoproline from various penultimate amino acid residues except L-proline. The chain is Pyrrolidone-carboxylate peptidase from Erwinia tasmaniensis (strain DSM 17950 / CFBP 7177 / CIP 109463 / NCPPB 4357 / Et1/99).